We begin with the raw amino-acid sequence, 325 residues long: Delta(1)-pyrroline-2-carboxylate reductase (325 aa).

It belongs to the ornithine cyclodeaminase/mu-crystallin family.

The catalysed reaction is L-proline + NAD(+) = 1-pyrroline-2-carboxylate + NADH + H(+). It catalyses the reaction L-proline + NADP(+) = 1-pyrroline-2-carboxylate + NADPH + H(+). Functionally, catalyzes the reduction of Delta(1)-pyrroline-2-carboxylate (Pyr2C) to L-proline, using preferentially NADPH over NADH as the electron donor. Is likely involved in a degradation pathway that converts trans-3-hydroxy-L-proline (t3LHyp) to L-proline. The polypeptide is Delta(1)-pyrroline-2-carboxylate reductase (Bacillus cereus (strain ATCC 10987 / NRS 248)).